We begin with the raw amino-acid sequence, 137 residues long: ATP synthase epsilon chain (137 aa).

This sequence belongs to the ATPase epsilon chain family. F-type ATPases have 2 components, CF(1) - the catalytic core - and CF(0) - the membrane proton channel. CF(1) has five subunits: alpha(3), beta(3), gamma(1), delta(1), epsilon(1). CF(0) has three main subunits: a, b and c.

The protein localises to the cell membrane. Its function is as follows. Produces ATP from ADP in the presence of a proton gradient across the membrane. The sequence is that of ATP synthase epsilon chain from Caldicellulosiruptor bescii (strain ATCC BAA-1888 / DSM 6725 / KCTC 15123 / Z-1320) (Anaerocellum thermophilum).